The sequence spans 478 residues: Protein nucleotidyltransferase YdiU (478 aa).

ATP-binding residues include glycine 84, glycine 86, arginine 87, lysine 107, aspartate 119, glycine 120, arginine 170, and arginine 177. Aspartate 246 acts as the Proton acceptor in catalysis. Residues asparagine 247 and aspartate 256 each coordinate Mg(2+). Aspartate 256 serves as a coordination point for ATP.

The protein belongs to the SELO family. It depends on Mg(2+) as a cofactor. The cofactor is Mn(2+).

The enzyme catalyses L-seryl-[protein] + ATP = 3-O-(5'-adenylyl)-L-seryl-[protein] + diphosphate. It carries out the reaction L-threonyl-[protein] + ATP = 3-O-(5'-adenylyl)-L-threonyl-[protein] + diphosphate. It catalyses the reaction L-tyrosyl-[protein] + ATP = O-(5'-adenylyl)-L-tyrosyl-[protein] + diphosphate. The catalysed reaction is L-histidyl-[protein] + UTP = N(tele)-(5'-uridylyl)-L-histidyl-[protein] + diphosphate. The enzyme catalyses L-seryl-[protein] + UTP = O-(5'-uridylyl)-L-seryl-[protein] + diphosphate. It carries out the reaction L-tyrosyl-[protein] + UTP = O-(5'-uridylyl)-L-tyrosyl-[protein] + diphosphate. In terms of biological role, nucleotidyltransferase involved in the post-translational modification of proteins. It can catalyze the addition of adenosine monophosphate (AMP) or uridine monophosphate (UMP) to a protein, resulting in modifications known as AMPylation and UMPylation. This chain is Protein nucleotidyltransferase YdiU, found in Escherichia coli O157:H7.